A 404-amino-acid polypeptide reads, in one-letter code: Mitochondrial potassium channel (404 aa).

The N-terminal 30 residues, 1 to 30, are a transit peptide targeting the mitochondrion; it reads MTGRSRVLAMRHVGGVSPVLVRRDLFLTRT. Residues 31 to 196 are Mitochondrial matrix-facing; sequence LCSHGPSQPR…KERTRAERTK (166 aa). At Ser-65 the chain carries Phosphoserine. Residues 111–138 adopt a coiled-coil conformation; that stretch reads VREAREDLESQQTKLKEVRDRLDRISRD. The chain crosses the membrane as a helical span at residues 197–217; that stretch reads NWSLIGSVLGALIGVAGSTYV. Residues 218 to 380 are Mitochondrial intermembrane-facing; that stretch reads NRVRLQELKA…LEAQVNRNTV (163 aa). A helical membrane pass occupies residues 381–401; the sequence is YGTLVTCATFVAVLPVLYMLF. The Mitochondrial matrix portion of the chain corresponds to 402-404; the sequence is RAS.

In terms of assembly, the mitochondrial potassium channel (mitoK(ATP)) forms a heteromultimer.

The protein resides in the mitochondrion inner membrane. The catalysed reaction is K(+)(in) = K(+)(out). With respect to regulation, channel activity inhibited by ATP via ABCB8/MITOSUR subunit. Pore-forming subunit of the mitochondrial ATP-gated potassium channel (mitoK(ATP)). Together with ATP-binding subunit ABCB8/MITOSUR of the mitoK(ATP) channel, mediates ATP-dependent K(+) currents across the mitochondrial inner membrane. An increase in ATP intracellular levels closes the channel, inhibiting K(+) transport, whereas a decrease in ATP levels enhances K(+) uptake in the mitochondrial matrix. May contribute to the homeostatic control of cellular metabolism under stress conditions by regulating the mitochondrial matrix volume. The protein is Mitochondrial potassium channel of Bos taurus (Bovine).